The chain runs to 461 residues: MATFSRQEFFQQLLQGCLLPTAQQGLDQIWLLLAICLACRLLWRLGLPSYLKHASTVAGGFFSLYHFFQLHMVWVVLLSLLCYLVLFLCRHSSHRGVFLSVTILIYLLMGEMHMVDTVTWHKMRGAQMIVAMKAVSLGFDLDRGEVGTVPSPVEFMGYLYFVGTIVFGPWISFHSYLQAVQGRPLSCRWLQKVARSLALALLCLVLSTCVGPYLFPYFIPLNGDRLLRNKKRKARGTMVRWLRAYESAVSFHFSNYFVGFLSEATATLAGAGFTEEKDHLEWDLTVSKPLNVELPRSMVEVVTSWNLPMSYWLNNYVFKNALRLGTFSAVLVTYAASALLHGFSFHLAAVLLSLAFITYVEHVLRKRLARILSACVLSKRCPPDCSHQHRLGLGVRALNLLFGALAIFHLAYLGSLFDVDVDDTTEEQGYGMAYTVHKWSELSWASHWVTFGCWIFYRLIG.

At 1-17 (MATFSRQEFFQQLLQGC) the chain is on the cytoplasmic side. The helical transmembrane segment at 18–38 (LLPTAQQGLDQIWLLLAICLA) threads the bilayer. Topologically, residues 39 to 66 (CRLLWRLGLPSYLKHASTVAGGFFSLYH) are extracellular. A helical transmembrane segment spans residues 67 to 87 (FFQLHMVWVVLLSLLCYLVLF). The Cytoplasmic segment spans residues 88–95 (LCRHSSHR). The helical transmembrane segment at 96–116 (GVFLSVTILIYLLMGEMHMVD) threads the bilayer. Topologically, residues 117–152 (TVTWHKMRGAQMIVAMKAVSLGFDLDRGEVGTVPSP) are extracellular. Residues 153–173 (VEFMGYLYFVGTIVFGPWISF) traverse the membrane as a helical segment. The Cytoplasmic segment spans residues 174–198 (HSYLQAVQGRPLSCRWLQKVARSLA). The S-palmitoyl cysteine moiety is linked to residue Cys-187. A helical transmembrane segment spans residues 199–219 (LALLCLVLSTCVGPYLFPYFI). Over 220-252 (PLNGDRLLRNKKRKARGTMVRWLRAYESAVSFH) the chain is Extracellular. Residues 253-273 (FSNYFVGFLSEATATLAGAGF) traverse the membrane as a helical segment. Residues 274–337 (TEEKDHLEWD…SAVLVTYAAS (64 aa)) are Cytoplasmic-facing. Residues 338–358 (ALLHGFSFHLAAVLLSLAFIT) traverse the membrane as a helical segment. His-341 is an active-site residue. Residues 359–396 (YVEHVLRKRLARILSACVLSKRCPPDCSHQHRLGLGVR) are Extracellular-facing. The chain crosses the membrane as a helical span at residues 397–417 (ALNLLFGALAIFHLAYLGSLF). Over 418 to 461 (DVDVDDTTEEQGYGMAYTVHKWSELSWASHWVTFGCWIFYRLIG) the chain is Cytoplasmic.

The protein belongs to the membrane-bound acyltransferase family. Porcupine subfamily. In terms of assembly, interacts with WNT1, WNT3, WNT3A, WNT4, WNT5A, WNT5B, WNT6, WNT7A and WNT7B. As to expression, isoform 1 is expressed in fetal brain, brain, amygdala, caudate nucleus, cerebellum, hippocampus, pituitary, thalamus, heart, skeletal muscle and testis. Isoform 4 is expressed in amygdala, corpus callosum, hippocampus, spinal cord, kidney, liver, lung, spleen, uterus, testis. Isoform 2 and isoform 3 are expressed in substantia negra, spinal cord, heart and lung.

The protein resides in the endoplasmic reticulum membrane. It carries out the reaction [Wnt protein]-L-serine + (9Z)-hexadecenoyl-CoA = [Wnt protein]-O-(9Z)-hexadecenoyl-L-serine + CoA. Functionally, protein-serine O-palmitoleoyltransferase that acts as a key regulator of the Wnt signaling pathway by mediating the attachment of palmitoleate, a 16-carbon monounsaturated fatty acid (C16:1(9Z)), to Wnt proteins. Serine palmitoleoylation of WNT proteins is required for efficient binding to frizzled receptors. In Homo sapiens (Human), this protein is Protein-serine O-palmitoleoyltransferase porcupine.